The primary structure comprises 629 residues: tRNA uridine 5-carboxymethylaminomethyl modification enzyme MnmG (629 aa).

FAD is bound by residues 14-19 (GAGHAG), valine 126, and serine 181. 273–287 (GPRYCPSIEDKVVRF) lines the NAD(+) pocket. Position 370 (glutamine 370) interacts with FAD.

Belongs to the MnmG family. In terms of assembly, homodimer. Heterotetramer of two MnmE and two MnmG subunits. The cofactor is FAD.

Its subcellular location is the cytoplasm. NAD-binding protein involved in the addition of a carboxymethylaminomethyl (cmnm) group at the wobble position (U34) of certain tRNAs, forming tRNA-cmnm(5)s(2)U34. The polypeptide is tRNA uridine 5-carboxymethylaminomethyl modification enzyme MnmG (Bacillus cereus (strain ATCC 14579 / DSM 31 / CCUG 7414 / JCM 2152 / NBRC 15305 / NCIMB 9373 / NCTC 2599 / NRRL B-3711)).